The following is a 93-amino-acid chain: Pyrimidine/purine nucleoside phosphorylase (93 aa).

This sequence belongs to the nucleoside phosphorylase PpnP family.

It carries out the reaction a purine D-ribonucleoside + phosphate = a purine nucleobase + alpha-D-ribose 1-phosphate. The enzyme catalyses adenosine + phosphate = alpha-D-ribose 1-phosphate + adenine. The catalysed reaction is cytidine + phosphate = cytosine + alpha-D-ribose 1-phosphate. It catalyses the reaction guanosine + phosphate = alpha-D-ribose 1-phosphate + guanine. It carries out the reaction inosine + phosphate = alpha-D-ribose 1-phosphate + hypoxanthine. The enzyme catalyses thymidine + phosphate = 2-deoxy-alpha-D-ribose 1-phosphate + thymine. The catalysed reaction is uridine + phosphate = alpha-D-ribose 1-phosphate + uracil. It catalyses the reaction xanthosine + phosphate = alpha-D-ribose 1-phosphate + xanthine. Functionally, catalyzes the phosphorolysis of diverse nucleosides, yielding D-ribose 1-phosphate and the respective free bases. Can use uridine, adenosine, guanosine, cytidine, thymidine, inosine and xanthosine as substrates. Also catalyzes the reverse reactions. This chain is Pyrimidine/purine nucleoside phosphorylase, found in Pseudomonas syringae pv. tomato (strain ATCC BAA-871 / DC3000).